Reading from the N-terminus, the 96-residue chain is Aspartyl/glutamyl-tRNA(Asn/Gln) amidotransferase subunit C (96 aa).

The protein belongs to the GatC family. As to quaternary structure, heterotrimer of A, B and C subunits.

It catalyses the reaction L-glutamyl-tRNA(Gln) + L-glutamine + ATP + H2O = L-glutaminyl-tRNA(Gln) + L-glutamate + ADP + phosphate + H(+). The catalysed reaction is L-aspartyl-tRNA(Asn) + L-glutamine + ATP + H2O = L-asparaginyl-tRNA(Asn) + L-glutamate + ADP + phosphate + 2 H(+). Its function is as follows. Allows the formation of correctly charged Asn-tRNA(Asn) or Gln-tRNA(Gln) through the transamidation of misacylated Asp-tRNA(Asn) or Glu-tRNA(Gln) in organisms which lack either or both of asparaginyl-tRNA or glutaminyl-tRNA synthetases. The reaction takes place in the presence of glutamine and ATP through an activated phospho-Asp-tRNA(Asn) or phospho-Glu-tRNA(Gln). The protein is Aspartyl/glutamyl-tRNA(Asn/Gln) amidotransferase subunit C of Bacillus cytotoxicus (strain DSM 22905 / CIP 110041 / 391-98 / NVH 391-98).